Here is a 424-residue protein sequence, read N- to C-terminus: Putative pachytene checkpoint protein 2 (424 aa).

179-186 (GPPGTGKT) contributes to the ATP binding site.

It belongs to the AAA ATPase family. PCH2 subfamily.

Functionally, plays a key role in chromosome recombination during meiosis. This is Putative pachytene checkpoint protein 2 (pch-2) from Caenorhabditis elegans.